A 590-amino-acid polypeptide reads, in one-letter code: MAGAAPGAIMDEDYFGSAAEWGDEADGGQQEDDYGEGEDDAEVQQECLHKFSTRDYIMEPSIFNTLKRYFQAGGSPENVIQLLSENYTAVAQTVNLLAEWLIQTGVEPVQVQETVENHLKSLLIKHFDPRKADSIFTEEGETPAWLEQMIAHTTWRDLFYKLAEAHPDCLMLNFTVKLISDAGYQGEITSVSTACQQLEVFSRVLRTSLATILDGGEENLEKHLPEFAKMVCHGEHTYLFAQAMMSVLAQEEQGGSAVRRVAQEVQRFAQEKGHDASQITLALGTAASYPRACQALGAMLSKGALNPADITVLFKMFTSMDPPPVELIRVPAFLDLFMQSLFKPGARINQDHKHKYIHILAYAASVVETWKKNKRVSINKDELKSTSKAVETVHNLCCNENKGASELVAELSTLYQCIRFPVVAMGVLKWVDWTVSEPRYFQLQTDHTPVHLALLDEISTCHQLLHPQVLQLLVKLFETEHSQLDVMEQLELKKTLLDRMVHLLSRGHVLPVVSYIRKCLEKLDTDISLIRHFVTEVLDVIAPPYTSDFVQLFLPILENDSIAGTIKTEGEHDPVTEFIAHCKSNFILVN.

Residues 15 to 43 (FGSAAEWGDEADGGQQEDDYGEGEDDAEV) are disordered. The span at 21–43 (WGDEADGGQQEDDYGEGEDDAEV) shows a compositional bias: acidic residues.

It belongs to the NELF-D family. As to quaternary structure, the NELF complex is composed of NELFA, NELFB, NELFCD and NELFE; NELFA and NELFCD form a stable subcomplex that binds primarily through NELFCD to the N-terminus of NELFB. Binds RNA which may help to stabilize the NELF complex on nucleic acid. In vitro, the NELFA:NELFCD subcomplex binds to ssDNA and ssRNA in a sequence- and structure-dependent manner. Interacts with ARAF1. Interacts with PCF11. Interacts with NELFB. Interacts with KAT8.

It localises to the nucleus. Essential component of the NELF complex, a complex that negatively regulates the elongation of transcription by RNA polymerase II. The NELF complex, which acts via an association with the DSIF complex and causes transcriptional pausing, is counteracted by the P-TEFb kinase complex. This is Negative elongation factor D (NELFCD) from Sus scrofa (Pig).